The sequence spans 121 residues: Large ribosomal subunit protein bL12 (121 aa).

Belongs to the bacterial ribosomal protein bL12 family. Homodimer. Part of the ribosomal stalk of the 50S ribosomal subunit. Forms a multimeric L10(L12)X complex, where L10 forms an elongated spine to which 2 to 4 L12 dimers bind in a sequential fashion. Binds GTP-bound translation factors.

Forms part of the ribosomal stalk which helps the ribosome interact with GTP-bound translation factors. Is thus essential for accurate translation. This Erwinia tasmaniensis (strain DSM 17950 / CFBP 7177 / CIP 109463 / NCPPB 4357 / Et1/99) protein is Large ribosomal subunit protein bL12.